The primary structure comprises 347 residues: Dual-specificity RNA methyltransferase RlmN (347 aa).

Glutamate 93 functions as the Proton acceptor in the catalytic mechanism. A Radical SAM core domain is found at aspartate 99–aspartate 327. The cysteines at positions 106 and 332 are disulfide-linked. [4Fe-4S] cluster is bound by residues cysteine 113, cysteine 117, and cysteine 120. Residues glycine 158–glutamate 159, serine 190, serine 213–asparagine 215, and asparagine 289 each bind S-adenosyl-L-methionine. Cysteine 332 acts as the S-methylcysteine intermediate in catalysis.

It belongs to the radical SAM superfamily. RlmN family. The cofactor is [4Fe-4S] cluster.

The protein resides in the cytoplasm. It carries out the reaction adenosine(2503) in 23S rRNA + 2 reduced [2Fe-2S]-[ferredoxin] + 2 S-adenosyl-L-methionine = 2-methyladenosine(2503) in 23S rRNA + 5'-deoxyadenosine + L-methionine + 2 oxidized [2Fe-2S]-[ferredoxin] + S-adenosyl-L-homocysteine. The enzyme catalyses adenosine(37) in tRNA + 2 reduced [2Fe-2S]-[ferredoxin] + 2 S-adenosyl-L-methionine = 2-methyladenosine(37) in tRNA + 5'-deoxyadenosine + L-methionine + 2 oxidized [2Fe-2S]-[ferredoxin] + S-adenosyl-L-homocysteine. In terms of biological role, specifically methylates position 2 of adenine 2503 in 23S rRNA and position 2 of adenine 37 in tRNAs. m2A2503 modification seems to play a crucial role in the proofreading step occurring at the peptidyl transferase center and thus would serve to optimize ribosomal fidelity. The polypeptide is Dual-specificity RNA methyltransferase RlmN (Pelobacter propionicus (strain DSM 2379 / NBRC 103807 / OttBd1)).